The sequence spans 180 residues: D-glycero-beta-D-manno-heptose-1,7-bisphosphate 7-phosphatase (180 aa).

D14 serves as the catalytic Nucleophile. Mg(2+) contacts are provided by D14 and D16. Substrate is bound by residues 14–16 (DRD), 22–25 (NDHY), and 56–59 (TNQS). The active-site Proton donor is D16. Zn(2+) contacts are provided by C95, H97, C110, and H112. A substrate-binding site is contributed by 113-114 (RK). Position 139 (D139) interacts with Mg(2+).

The protein belongs to the gmhB family. Monomer. The cofactor is Mg(2+).

It localises to the cytoplasm. The catalysed reaction is D-glycero-beta-D-manno-heptose 1,7-bisphosphate + H2O = D-glycero-beta-D-manno-heptose 1-phosphate + phosphate. It functions in the pathway nucleotide-sugar biosynthesis; ADP-L-glycero-beta-D-manno-heptose biosynthesis; ADP-L-glycero-beta-D-manno-heptose from D-glycero-beta-D-manno-heptose 7-phosphate: step 2/4. The protein operates within bacterial outer membrane biogenesis; LPS core biosynthesis. Converts the D-glycero-beta-D-manno-heptose 1,7-bisphosphate (beta-HBP) intermediate into D-glycero-beta-D-manno-heptose 1-phosphate by removing the phosphate group at the C-7 position. Also catalyzes the dephosphorylation of D-glycero-alpha-D-manno-heptose 1,7-bisphosphate in vitro. This is D-glycero-beta-D-manno-heptose-1,7-bisphosphate 7-phosphatase from Rhodopseudomonas palustris (strain ATCC BAA-98 / CGA009).